A 152-amino-acid polypeptide reads, in one-letter code: Small ribosomal subunit protein bS6 (152 aa).

A disordered region spans residues 96–152; the sequence is HEEGPSAMLQKRDRDDRGPREGGDRGPRREFGDRPPRRDGDFQRGPRPDRAPREDRA.

Belongs to the bacterial ribosomal protein bS6 family.

Its function is as follows. Binds together with bS18 to 16S ribosomal RNA. The chain is Small ribosomal subunit protein bS6 from Rhizobium etli (strain CIAT 652).